A 367-amino-acid chain; its full sequence is Peptide chain release factor 2 (367 aa).

Residue glutamine 250 is modified to N5-methylglutamine.

Belongs to the prokaryotic/mitochondrial release factor family. Post-translationally, methylated by PrmC. Methylation increases the termination efficiency of RF2.

It localises to the cytoplasm. Its function is as follows. Peptide chain release factor 2 directs the termination of translation in response to the peptide chain termination codons UGA and UAA. The chain is Peptide chain release factor 2 from Saccharopolyspora erythraea (strain ATCC 11635 / DSM 40517 / JCM 4748 / NBRC 13426 / NCIMB 8594 / NRRL 2338).